The primary structure comprises 414 residues: Tyrosine--tRNA ligase (414 aa).

Residue Tyr-35 participates in L-tyrosine binding. A 'HIGH' region motif is present at residues 40-49; sequence PTADSLHVGH. Residues Tyr-164 and Gln-168 each coordinate L-tyrosine. The short motif at 226–230 is the 'KMSKS' region element; the sequence is KFGKT. Lys-229 provides a ligand contact to ATP. In terms of domain architecture, S4 RNA-binding spans 347-414; the sequence is TKVIDALIEV…KKKYFVILIK (68 aa).

It belongs to the class-I aminoacyl-tRNA synthetase family. TyrS type 1 subfamily. Homodimer.

The protein resides in the cytoplasm. It catalyses the reaction tRNA(Tyr) + L-tyrosine + ATP = L-tyrosyl-tRNA(Tyr) + AMP + diphosphate + H(+). Functionally, catalyzes the attachment of tyrosine to tRNA(Tyr) in a two-step reaction: tyrosine is first activated by ATP to form Tyr-AMP and then transferred to the acceptor end of tRNA(Tyr). This is Tyrosine--tRNA ligase from Mycoplasma mycoides subsp. mycoides SC (strain CCUG 32753 / NCTC 10114 / PG1).